Here is a 355-residue protein sequence, read N- to C-terminus: Serum paraoxonase/arylesterase 1 (355 aa).

An intrachain disulfide couples C42 to C353. 2 residues coordinate Ca(2+): E53 and D54. Catalysis depends on H115, which acts as the Proton acceptor. The Ca(2+) site is built by I117, N168, D169, and N224. N253 carries an N-linked (GlcNAc...) asparagine glycan. Ca(2+)-binding residues include D269 and N270. N-linked (GlcNAc...) asparagine glycans are attached at residues N270 and N324.

The protein belongs to the paraoxonase family. In terms of assembly, homodimer. Heterooligomer with phosphate-binding protein (HPBP). Interacts with CLU. The cofactor is Ca(2+). Post-translationally, glycosylated. In terms of processing, the signal sequence is not cleaved. Present in two forms, form B contains a disulfide bond, form A does not. Plasma, associated with HDL (at protein level). Expressed in liver, but not in heart, brain, placenta, lung, skeletal muscle, kidney or pancreas.

Its subcellular location is the secreted. It is found in the extracellular space. The enzyme catalyses a phenyl acetate + H2O = a phenol + acetate + H(+). It catalyses the reaction An aryl dialkyl phosphate + H2O = dialkyl phosphate + an aryl alcohol.. The catalysed reaction is an N-acyl-L-homoserine lactone + H2O = an N-acyl-L-homoserine + H(+). Its function is as follows. Hydrolyzes the toxic metabolites of a variety of organophosphorus insecticides. Capable of hydrolyzing a broad spectrum of organophosphate substrates and lactones, and a number of aromatic carboxylic acid esters. Mediates an enzymatic protection of low density lipoproteins against oxidative modification and the consequent series of events leading to atheroma formation. The sequence is that of Serum paraoxonase/arylesterase 1 (PON1) from Homo sapiens (Human).